Consider the following 76-residue polypeptide: Vasotab-TY2 (76 aa).

The first 21 residues, 1-21, serve as a signal peptide directing secretion; sequence MKFALFSVLVLMLIATFVAAD. The Kazal-like domain occupies 22–76; the sequence is DCPRICTADYTPVCGTPSGGRRSANRTFANQCGLDSHNCLNKGATYDKLHDGECK. Cystine bridges form between Cys23–Cys60, Cys27–Cys53, and Cys35–Cys75.

In terms of tissue distribution, expressed by the salivary gland.

The protein resides in the secreted. Vasodilator protein that inhibits vasoconstriction of isolated rat femoral artery induced by phenylephrine. Since platelet aggregation and vasoconstriction are key hemostatic responses, particularly in small wounds, this protein likely participates in the antihemostatic responses during blood feeding. Blocks L-type calcium channels (Cav1/CACNA1) in left ventricular myocytes isolated from rat hearts. This chain is Vasotab-TY2, found in Tabanus yao (Horsefly).